Consider the following 1325-residue polypeptide: ATP-binding cassette sub-family C member 4 (1325 aa).

Transmembrane regions (helical) follow at residues 93-113, 136-156, 205-225, 227-247, 322-342, and 351-371; these read LILGIFTLIEEGTRVVQPLFL, GYAAVLSMCTLILAILHHLYF, FDQVTIFLHFLWAGPLQAIAV, VLLWVEIGISCLAGLAVLVIL, ASFFIANKVILFVTFTSYVLL, and VFVAMTLYGAVRLTVTLFFPS. The 285-residue stretch at 93-377 folds into the ABC transmembrane type-1 1 domain; sequence LILGIFTLIE…FFPSAIERGS (285 aa). In terms of domain architecture, ABC transporter 1 spans 410–633; that stretch reads VHVQDFTAFW…GVDFGSLLKK (224 aa). 445-452 contributes to the ATP binding site; it reads GPVGAGKS. Phosphothreonine occurs at positions 646 and 648. Residues 657–667 are compositionally biased toward polar residues; that stretch reads ASIWSQQSSRP. The interval 657 to 690 is disordered; the sequence is ASIWSQQSSRPSLKDGAPEGQDAENTQAVQPEES. Residues Ser-664 and Ser-668 each carry the phosphoserine modification. Helical transmembrane passes span 710–730, 761–781, 849–869, 954–974, and 977–997; these read SWFFIIFLVLLNMVGQVFYVL, LSWYLGIYAGLTAVTVLFGIA, LVVSVIAVAAAVIPWILIPLV, AICAIFVIVVAFGSLVLAKTL, and GQVGLALSYALTLMGMFQWSV. The region spanning 714 to 1005 is the ABC transmembrane type-1 2 domain; that stretch reads IIFLVLLNMV…SVRQSAEVEN (292 aa). Residues 1041 to 1274 enclose the ABC transporter 2 domain; it reads IVFDNVNFTY…PESLFYKMVQ (234 aa). 1075–1082 contributes to the ATP binding site; it reads GRTGAGKS. The PDZ-binding motif lies at 1322-1325; it reads ETAL.

As to quaternary structure, interacts (via PDZ-binding motif) with SNX27 (via PDZ domain); this interaction accelerates MRP4 internalization. It depends on Mg(2+) as a cofactor. In terms of processing, N-glycosylated; leading to substrate-selective effects on its transport activity.

The protein localises to the basolateral cell membrane. It localises to the apical cell membrane. It carries out the reaction ATP + H2O + xenobioticSide 1 = ADP + phosphate + xenobioticSide 2.. The enzyme catalyses an S-substituted glutathione(in) + ATP + H2O = an S-substituted glutathione(out) + ADP + phosphate + H(+). The catalysed reaction is 17beta-estradiol 17-O-(beta-D-glucuronate)(in) + ATP + H2O = 17beta-estradiol 17-O-(beta-D-glucuronate)(out) + ADP + phosphate + H(+). It catalyses the reaction dehydroepiandrosterone 3-sulfate(in) + ATP + H2O = dehydroepiandrosterone 3-sulfate(out) + ADP + phosphate + H(+). It carries out the reaction leukotriene C4(in) + ATP + H2O = leukotriene C4(out) + ADP + phosphate + H(+). The enzyme catalyses leukotriene B4(in) + ATP + H2O = leukotriene B4(out) + ADP + phosphate + H(+). The catalysed reaction is urate(in) + ATP + H2O = urate(out) + ADP + phosphate + H(+). It catalyses the reaction 3',5'-cyclic GMP(in) + ATP + H2O = 3',5'-cyclic GMP(out) + ADP + phosphate + H(+). It carries out the reaction 3',5'-cyclic AMP(in) + ATP + H2O = 3',5'-cyclic AMP(out) + ADP + phosphate + H(+). The enzyme catalyses prostaglandin E2(in) + ATP + H2O = prostaglandin E2(out) + ADP + phosphate + H(+). The catalysed reaction is prostaglandin E1(in) + ATP + H2O = prostaglandin E1(out) + ADP + phosphate + H(+). It catalyses the reaction glycodeoxycholate(in) + glutathione(in) + ATP + H2O = glycodeoxycholate(out) + glutathione(out) + ADP + phosphate + H(+). It carries out the reaction cholate(in) + glutathione(in) + ATP + H2O = cholate(out) + glutathione(out) + ADP + phosphate + H(+). The enzyme catalyses glycocholate(in) + glutathione(in) + ATP + H2O = glycocholate(out) + glutathione(out) + ADP + phosphate + H(+). The catalysed reaction is taurocholate(in) + glutathione(in) + ATP + H2O = taurocholate(out) + glutathione(out) + ADP + phosphate + H(+). It catalyses the reaction glycochenodeoxycholate(in) + glutathione(in) + ATP + H2O = glycochenodeoxycholate(out) + glutathione(out) + ADP + phosphate + H(+). It carries out the reaction taurochenodeoxycholate(in) + glutathione(in) + ATP + H2O = taurochenodeoxycholate(out) + glutathione(out) + ADP + phosphate + H(+). The enzyme catalyses glycoursodeoxycholate(in) + glutathione(in) + ATP + H2O = glycoursodeoxycholate(out) + glutathione(out) + ADP + phosphate + H(+). The catalysed reaction is tauroursodeoxycholate(in) + glutathione(in) + ATP + H2O = tauroursodeoxycholate(out) + glutathione(out) + ADP + phosphate + H(+). In terms of biological role, ATP-dependent transporter of the ATP-binding cassette (ABC) family that actively extrudes physiological compounds and xenobiotics from cells. Transports a range of endogenous molecules that have a key role in cellular communication and signaling, including cyclic nucleotides such as cyclic AMP (cAMP) and cyclic GMP (cGMP), bile acids, steroid conjugates, urate, and prostaglandins. Also mediates the ATP-dependent efflux of glutathione conjugates such as leukotriene C4 (LTC4) and leukotriene B4 (LTB4). The presence of GSH is necessary for the ATP-dependent transport of LTB4, whereas GSH is not required for the transport of LTC4. Mediates the cotransport of bile acids with reduced glutathione (GSH). Transports a wide range of drugs and their metabolites, including anticancer, antiviral and antibiotics molecules. Confers resistance to anticancer agents. The polypeptide is ATP-binding cassette sub-family C member 4 (Mus musculus (Mouse)).